Consider the following 210-residue polypeptide: dITP/XTP pyrophosphatase (210 aa).

Residue 16 to 21 (SNNKGK) participates in substrate binding. Asp-79 serves as the catalytic Proton acceptor. Asp-79 is a Mg(2+) binding site. Substrate contacts are provided by residues Ser-80, 166–169 (FGYD), Lys-189, and 194–195 (HR).

It belongs to the HAM1 NTPase family. In terms of assembly, homodimer. The cofactor is Mg(2+).

It carries out the reaction XTP + H2O = XMP + diphosphate + H(+). The enzyme catalyses dITP + H2O = dIMP + diphosphate + H(+). The catalysed reaction is ITP + H2O = IMP + diphosphate + H(+). Functionally, pyrophosphatase that catalyzes the hydrolysis of nucleoside triphosphates to their monophosphate derivatives, with a high preference for the non-canonical purine nucleotides XTP (xanthosine triphosphate), dITP (deoxyinosine triphosphate) and ITP. Seems to function as a house-cleaning enzyme that removes non-canonical purine nucleotides from the nucleotide pool, thus preventing their incorporation into DNA/RNA and avoiding chromosomal lesions. The chain is dITP/XTP pyrophosphatase from Acinetobacter baylyi (strain ATCC 33305 / BD413 / ADP1).